We begin with the raw amino-acid sequence, 111 residues long: uncharacterized protein (111 aa).

The helical transmembrane segment at 81 to 101 threads the bilayer; that stretch reads YFFLLFYVSFPHIFLGLFFFI.

It localises to the membrane. This is an uncharacterized protein from Schizosaccharomyces pombe (strain 972 / ATCC 24843) (Fission yeast).